The following is a 38-amino-acid chain: Potassium channel toxin alpha-KTx 3.17 (38 aa).

Disulfide bonds link cysteine 8/cysteine 28, cysteine 14/cysteine 33, and cysteine 18/cysteine 35.

It belongs to the short scorpion toxin superfamily. Potassium channel inhibitor family. Alpha-KTx 03 subfamily. In terms of tissue distribution, expressed by the venom gland.

The protein resides in the secreted. Completely inhibits the (125)I-kaliotoxin binding on rat brain synaptosomes with high-affinity (IC(50)=0.1 nM). Is a potent Kv1.3/KCNA3 ligand. The polypeptide is Potassium channel toxin alpha-KTx 3.17 (Buthus paris (Scorpion)).